Here is a 454-residue protein sequence, read N- to C-terminus: Glutamate--tRNA ligase (454 aa).

The 'HIGH' region signature appears at 7-17 (PSPTGCLHIGG). Zn(2+)-binding residues include Cys-96, Cys-98, Cys-123, and Asp-125. Residues 230-234 (RLSKR) carry the 'KMSKS' region motif. ATP is bound at residue Lys-233.

Belongs to the class-I aminoacyl-tRNA synthetase family. Glutamate--tRNA ligase type 1 subfamily. As to quaternary structure, monomer. Requires Zn(2+) as cofactor.

Its subcellular location is the cytoplasm. It catalyses the reaction tRNA(Glu) + L-glutamate + ATP = L-glutamyl-tRNA(Glu) + AMP + diphosphate. Functionally, catalyzes the attachment of glutamate to tRNA(Glu) in a two-step reaction: glutamate is first activated by ATP to form Glu-AMP and then transferred to the acceptor end of tRNA(Glu). The polypeptide is Glutamate--tRNA ligase (Ruthia magnifica subsp. Calyptogena magnifica).